Consider the following 1708-residue polypeptide: MEAHQFIKAPGITTAIEQAALAAANSALANAVVVRPFLSRVQTEILINLMQPRQLVFRPEVLWNHPIQRVIHNELEQYCRARAGRCLEVGAHPRSINDNPNVLHRCFLRPVGRDVQRWYSAPTRGPAANCRRSALRGLPPVDRTYCFDGFSRCAFAAETGVALYSLHDLWPADVAEAMARHGMTRLYAALHLPPEVLLPPGTYHTTSYLLIHDGNRAVVTYEGDTSAGYNHDVSILRAWIRTTKIVGDHPLVIERVRAIGCHFVLLLTAAPEPSPMPYVPYPRSTEVYVRSIFGPGGSPSLFPSACSTKSTFHAVPVHIWDXLMLFGATLXDQAFCCSRLMTYLRGISYKVTVGALVANEGWNASEDALTAVITAAYLTICHQRYLRTQAISKGMRRLEVEHAQKFITRLYSWLFEKSGRDYIPGRQLQFYAQCRRWLSAGFHLXPRXLVFDESVPCRCRTFLKKVAGKFCCFMRWLGQECTCFLEPAEGLVGDQGHDNEAYEGSEVDPAEPAHLDVSGTYAVHGHQLEALYRALNVPHDIAARASRLTATVELVASPDRLECRTVLGNKTFRTTVVDGAHLEANGPEEYVLSFDASRQSMGAGSHSLTYELTPAGLQVKISSNGLDCTATFPPGGAPSAAPGEVAAFCSALYRYNRFTQRHSLTGGLWLHPEGLLGIFPPFSPGHIWESANPFCGEGTLYTRTWSTSGFSSDFSPPEAAAPASAAAPGLPYPTPPVSDIWVLPPPSEESHVDAASVPSVPEPAGLTSPIVLTPPPPPPPVRKPATSPPPRTRRLLYTYPDGAKVYAGSLXESDCDWLVNASNPGHRPGGGLCHAFYQRFPEAFYSTEFIMREGLAAYTLTPRPIIHAVAPDYRVEQNPKRLEAAYRETCSRRGTAAYPLLGSGIYQVPVSLSFDAWERNHRPGDELYLTEPAAAWFEANKPAQPALTITEDTARTANLALEIDAATEVGRACAGCTISPGIVHYQFTAGVPGSGKSRSIQQGDVDVVVVPTRELRNSWRRRGFAAFTPHTAARVTIGRRVVIDEAPSLPPHLLLLHMQRASSVHLLGDPNQIPAIDFEHAGLVPAIRPELAPTSWWHVTHRCPADVCELIRGAYPKIQTTSRVLRSLFWNEPAIGQKLVFTQAAKAANPGAITVHEAQGATFTETTIIATADARGLIQSSRAHAIVALTRHTEKCVILDAPGLLREVGISDVIVNNFFLAGGEVGHHRPSVIPRGNPDQNLGTLQAFPPSCQISAYHQLAEELGHRPAPVAAVLPPCPELEQGLLYMPQELTVSDSVLVFELTDIVHCRMAAPSQRKAVLSTLVGRYGRRTKLYEAAHSDVRESLARFIPTIGPVRATTCELYELVEAMVEKGQDGSAVLELDLCNRDVSRITFFQKDCNKFTTGETIAHGKVGQGISAWSKTFCALFGPWFRAIEKEILALLPPNIFYGDAYEESVFAAAVSGAGSCMVFENDFSEFDSTQNNFSLGLECVVMEECGMPQWLIRLYHLVRSAWILQAPKESLKGFWKKHSGEPGTLLWNTVWNMAIIAHCYEFRDFRVAAFKGDDSVVLCSDYRQXRNAAALIAGCGLKLKVDYRPIGLYAGVVVAPGLGTLPDVVRFAGRLSEKNWGPGPERAEQLRLAVCDFLRGLTNVAQVCVDVVSRVYGVSPGLVHNLIGMLQTIADGKAHFTENIKPVLDLTNSIIQRVE.

The Alphavirus-like MT domain maps to 56-240; that stretch reads VFRPEVLWNH…HDVSILRAWI (185 aa). The segment at 60 to 240 is methyltransferase; the sequence is EVLWNHPIQR…HDVSILRAWI (181 aa). The segment at 241-439 is Y-domain; the sequence is RTTKIVGDHP…FYAQCRRWLS (199 aa). Cys434 and Cys481 are disulfide-bonded. Residues 442 to 509 are putative protease; it reads FHLXPRXLVF…EAYEGSEVDP (68 aa). The interval 510 to 691 is zinc-binding; sequence AEPAHLDVSG…FSPGHIWESA (182 aa). Residues His671, Glu673, and His686 each contribute to the Zn(2+) site. The segment at 714 to 793 is hinge; it reads FSPPEAAAPA…PATSPPPRTR (80 aa). Positions 747–792 are disordered; sequence SEESHVDAASVPSVPEPAGLTSPIVLTPPPPPPPVRKPATSPPPRT. A compositionally biased stretch (pro residues) spans 772–790; sequence LTPPPPPPPVRKPATSPPP. Residues 790–936 enclose the Macro domain; it reads PRTRRLLYTY…LYLTEPAAAW (147 aa). Residues 800–957 form an X-domain region; the sequence is PDGAKVYAGS…TITEDTARTA (158 aa). The region spanning 949-1097 is the (+)RNA virus helicase ATP-binding domain; that stretch reads ITEDTARTAN…RPELAPTSWW (149 aa). An NTPase/helicase region spans residues 975–1219; the sequence is GCTISPGIVH…ISDVIVNNFF (245 aa). 990 to 997 contacts ATP; sequence GVPGSGKS. The region spanning 1098-1231 is the (+)RNA virus helicase C-terminal domain; that stretch reads HVTHRCPADV…GGEVGHHRPS (134 aa). The interval 1222-1708 is RNA-directed RNA polymerase; that stretch reads GGEVGHHRPS…LTNSIIQRVE (487 aa). The region spanning 1469-1580 is the RdRp catalytic domain; sequence CMVFENDFSE…LCSDYRQXRN (112 aa).

It belongs to the hepevirus non-structural polyprotein family. As to quaternary structure, the protease domain interacts with host EIF2AK4 (via C-terminus); this interaction inhibits dimerization of EIF2AK4 and prevents EIF2AK4-mediated phosphorylation of host EIF2A. Mg(2+) is required as a cofactor. ORF1 polyprotein does not seem to be processed into distinct enzymatic domains by a viral protease belonging to ORF1, but could be processed by a host serine protease like thrombin.

It is found in the host cytoplasm. Its subcellular location is the host perinuclear region. It carries out the reaction RNA(n) + a ribonucleoside 5'-triphosphate = RNA(n+1) + diphosphate. The enzyme catalyses GTP + S-adenosyl-L-methionine = N(7)-methyl-GTP + S-adenosyl-L-homocysteine. With respect to regulation, putative protease: Inhibited by chymostatin. In terms of biological role, methyltransferase: Displays a capping enzyme activity. This function is necessary since all viral RNAs are synthesized in the cytoplasm, and host capping enzymes are restricted to the nucleus. The enzymatic reaction involves a covalent link between 7-methyl-GMP and the methyltransferase, whereas eukaryotic capping enzymes form a covalent complex only with GMP. Methyltransferase catalyzes transfer of a methyl group from S-adenosylmethionine to GTP and GDP to yield m(7)GTP or m(7)GDP. GDP is a better substrate than GTP. This enzyme also displays guanylyltransferase activity to form a covalent complex, methyltransferase-m(7)GMP, from which 7-methyl-GMP is transferred to the mRNA to create the cap structure. Y-domain: Indispensable for virus replication. Functionally, putative protease: The putative protease domain although necessary for replication of the virus may not be a protease but rather a structural Zn(2+)-binding domain. Inhibits induction of IFN-beta by MDA5 and RIG-I pathways and down-regulates the expression of MDA5. Its function is as follows. NTPase/helicase: Multi-functional protein that exhibits NTPase and RNA unwinding activities. Hydrolyzes all NTPs efficiently and unwinds RNA duplexes containing 5' overhangs. Possesses a sequence independent RNA-5'-triphosphatase (RTPase) activity suggestive of its role in forming viral cap structure. Also participates in viral genome replication, RNA translocation and genome packaging/unpackaging. In terms of biological role, RNA-directed RNA polymerase: Plays an essential role in the virus replication. Binds to the 3'-end of the genomic RNA to initiate viral replication. The polypeptide is Non-structural polyprotein pORF1 (Bandicota bengalensis (lesser bandicoot rat)).